The primary structure comprises 380 residues: Queuine tRNA-ribosyltransferase (380 aa).

Asp95 functions as the Proton acceptor in the catalytic mechanism. Residues 95–99 (DSGGF), Asp149, Gln192, and Gly219 contribute to the substrate site. The interval 250–256 (GVGSPDS) is RNA binding. Asp269 functions as the Nucleophile in the catalytic mechanism. The tract at residues 274 to 278 (TRIGR) is RNA binding; important for wobble base 34 recognition. The Zn(2+) site is built by Cys307, Cys309, Cys312, and His338.

Belongs to the queuine tRNA-ribosyltransferase family. In terms of assembly, homodimer. Within each dimer, one monomer is responsible for RNA recognition and catalysis, while the other monomer binds to the replacement base PreQ1. Zn(2+) serves as cofactor.

It carries out the reaction 7-aminomethyl-7-carbaguanine + guanosine(34) in tRNA = 7-aminomethyl-7-carbaguanosine(34) in tRNA + guanine. The protein operates within tRNA modification; tRNA-queuosine biosynthesis. Functionally, catalyzes the base-exchange of a guanine (G) residue with the queuine precursor 7-aminomethyl-7-deazaguanine (PreQ1) at position 34 (anticodon wobble position) in tRNAs with GU(N) anticodons (tRNA-Asp, -Asn, -His and -Tyr). Catalysis occurs through a double-displacement mechanism. The nucleophile active site attacks the C1' of nucleotide 34 to detach the guanine base from the RNA, forming a covalent enzyme-RNA intermediate. The proton acceptor active site deprotonates the incoming PreQ1, allowing a nucleophilic attack on the C1' of the ribose to form the product. After dissociation, two additional enzymatic reactions on the tRNA convert PreQ1 to queuine (Q), resulting in the hypermodified nucleoside queuosine (7-(((4,5-cis-dihydroxy-2-cyclopenten-1-yl)amino)methyl)-7-deazaguanosine). The polypeptide is Queuine tRNA-ribosyltransferase (Geobacillus kaustophilus (strain HTA426)).